Consider the following 1376-residue polypeptide: DNA-directed RNA polymerase subunit beta (1376 aa).

A compositionally biased stretch (polar residues) spans 1357–1368 (NSKTGRQTNPGT). The interval 1357–1376 (NSKTGRQTNPGTRENLPAAE) is disordered.

It belongs to the RNA polymerase beta chain family. The RNAP catalytic core consists of 2 alpha, 1 beta, 1 beta' and 1 omega subunit. When a sigma factor is associated with the core the holoenzyme is formed, which can initiate transcription.

The enzyme catalyses RNA(n) + a ribonucleoside 5'-triphosphate = RNA(n+1) + diphosphate. Its function is as follows. DNA-dependent RNA polymerase catalyzes the transcription of DNA into RNA using the four ribonucleoside triphosphates as substrates. The chain is DNA-directed RNA polymerase subunit beta from Azorhizobium caulinodans (strain ATCC 43989 / DSM 5975 / JCM 20966 / LMG 6465 / NBRC 14845 / NCIMB 13405 / ORS 571).